Consider the following 61-residue polypeptide: Putative neurotoxin-D (61 aa).

Residues 1–19 (MRTTVAILLVLFALSAILA) form the signal peptide. 3 disulfides stabilise this stretch: cysteine 31-cysteine 51, cysteine 37-cysteine 56, and cysteine 39-cysteine 58.

Expressed by the venom gland.

Its subcellular location is the secreted. This is Putative neurotoxin-D from Lychas mucronatus (Chinese swimming scorpion).